A 328-amino-acid chain; its full sequence is Hydrogenase-2 operon protein HybA (328 aa).

An N-terminal signal peptide occupies residues 1-27 (MNRRNFIKAASCGALLTGALPSVSHAA). 4Fe-4S ferredoxin-type domains are found at residues 38-68 (LGMLYDSTLCVGCQACVTKCQDINFPERNPQ), 103-134 (NGYAYIKKQCMHCVDPNCVSVCPVSALKKDPK), and 136-165 (GIVHYDKDVCTGCRYCMVACPYNVPKYDYN). The [4Fe-4S] cluster site is built by cysteine 47, cysteine 50, cysteine 53, cysteine 57, cysteine 112, cysteine 115, cysteine 120, cysteine 124, cysteine 145, cysteine 148, cysteine 151, cysteine 155, cysteine 174, cysteine 177, cysteine 193, and cysteine 197.

[4Fe-4S] cluster is required as a cofactor.

It is found in the periplasm. In terms of biological role, participates in the periplasmic electron-transferring activity of hydrogenase 2 during its catalytic turnover. The protein is Hydrogenase-2 operon protein HybA (hybA) of Escherichia coli O157:H7.